The primary structure comprises 871 residues: Protein translocase subunit SecA (871 aa).

Residues Q80, 98-102 (GEGKT), and D537 each bind ATP.

The protein belongs to the SecA family. Monomer and homodimer. Part of the essential Sec protein translocation apparatus which comprises SecA, SecYEG and auxiliary proteins SecDF. Other proteins may also be involved. A single SecA monomer interacts with SecY in the channel.

It is found in the cell inner membrane. It localises to the cytoplasm. It carries out the reaction ATP + H2O + cellular proteinSide 1 = ADP + phosphate + cellular proteinSide 2.. In terms of biological role, part of the Sec protein translocase complex. Interacts with the SecYEG preprotein conducting channel. Has a central role in coupling the hydrolysis of ATP to the transfer of proteins into and across the cell membrane, serving as an ATP-driven molecular motor driving the stepwise translocation of polypeptide chains across the membrane. This Thermotoga maritima (strain ATCC 43589 / DSM 3109 / JCM 10099 / NBRC 100826 / MSB8) protein is Protein translocase subunit SecA.